The chain runs to 487 residues: Protein nucleotidyltransferase YdiU (487 aa).

Residues glycine 90, glycine 92, arginine 93, lysine 113, aspartate 125, glycine 126, arginine 176, and arginine 183 each contribute to the ATP site. The Proton acceptor role is filled by aspartate 252. Residues asparagine 253 and aspartate 262 each contribute to the Mg(2+) site. Position 262 (aspartate 262) interacts with ATP.

This sequence belongs to the SELO family. Requires Mg(2+) as cofactor. It depends on Mn(2+) as a cofactor.

It catalyses the reaction L-seryl-[protein] + ATP = 3-O-(5'-adenylyl)-L-seryl-[protein] + diphosphate. It carries out the reaction L-threonyl-[protein] + ATP = 3-O-(5'-adenylyl)-L-threonyl-[protein] + diphosphate. The enzyme catalyses L-tyrosyl-[protein] + ATP = O-(5'-adenylyl)-L-tyrosyl-[protein] + diphosphate. The catalysed reaction is L-histidyl-[protein] + UTP = N(tele)-(5'-uridylyl)-L-histidyl-[protein] + diphosphate. It catalyses the reaction L-seryl-[protein] + UTP = O-(5'-uridylyl)-L-seryl-[protein] + diphosphate. It carries out the reaction L-tyrosyl-[protein] + UTP = O-(5'-uridylyl)-L-tyrosyl-[protein] + diphosphate. In terms of biological role, nucleotidyltransferase involved in the post-translational modification of proteins. It can catalyze the addition of adenosine monophosphate (AMP) or uridine monophosphate (UMP) to a protein, resulting in modifications known as AMPylation and UMPylation. The protein is Protein nucleotidyltransferase YdiU of Pseudomonas syringae pv. tomato (strain ATCC BAA-871 / DC3000).